We begin with the raw amino-acid sequence, 534 residues long: CTP synthase (534 aa).

The segment at 1-266 (MKTKFIFVTG…DEQVVEKLNI (266 aa)) is amidoligase domain. Ser14 is a CTP binding site. Ser14 contributes to the UTP binding site. ATP contacts are provided by residues 15 to 20 (SIGKGL) and Asp72. Residues Asp72 and Glu140 each coordinate Mg(2+). CTP-binding positions include 147–149 (DIE), 187–192 (KTKPTQ), and Lys223. Residues 187–192 (KTKPTQ) and Lys223 contribute to the UTP site. Residues 292 to 534 (RIAIVGKYVN…IAAALHNIKA (243 aa)) enclose the Glutamine amidotransferase type-1 domain. L-glutamine is bound at residue Gly354. Catalysis depends on Cys381, which acts as the Nucleophile; for glutamine hydrolysis. L-glutamine is bound by residues 382-385 (LGMQ), Glu405, and Arg462. Catalysis depends on residues His507 and Glu509.

The protein belongs to the CTP synthase family. In terms of assembly, homotetramer.

The enzyme catalyses UTP + L-glutamine + ATP + H2O = CTP + L-glutamate + ADP + phosphate + 2 H(+). It carries out the reaction L-glutamine + H2O = L-glutamate + NH4(+). The catalysed reaction is UTP + NH4(+) + ATP = CTP + ADP + phosphate + 2 H(+). Its pathway is pyrimidine metabolism; CTP biosynthesis via de novo pathway; CTP from UDP: step 2/2. Allosterically activated by GTP, when glutamine is the substrate; GTP has no effect on the reaction when ammonia is the substrate. The allosteric effector GTP functions by stabilizing the protein conformation that binds the tetrahedral intermediate(s) formed during glutamine hydrolysis. Inhibited by the product CTP, via allosteric rather than competitive inhibition. Catalyzes the ATP-dependent amination of UTP to CTP with either L-glutamine or ammonia as the source of nitrogen. Regulates intracellular CTP levels through interactions with the four ribonucleotide triphosphates. The sequence is that of CTP synthase from Geotalea uraniireducens (strain Rf4) (Geobacter uraniireducens).